The chain runs to 202 residues: Dual-action ribosomal maturation protein DarP (202 aa).

Residues 1 to 13 (MPPMTRNTRNNPN) are compositionally biased toward low complexity. Residues 1-39 (MPPMTRNTRNNPNGRFPGAFAPEDEDDLPKSKSQRKRDM) are disordered.

The protein belongs to the DarP family.

The protein resides in the cytoplasm. Functionally, member of a network of 50S ribosomal subunit biogenesis factors which assembles along the 30S-50S interface, preventing incorrect 23S rRNA structures from forming. Promotes peptidyl transferase center (PTC) maturation. The protein is Dual-action ribosomal maturation protein DarP of Cupriavidus metallidurans (strain ATCC 43123 / DSM 2839 / NBRC 102507 / CH34) (Ralstonia metallidurans).